Consider the following 220-residue polypeptide: Ras-related protein Rab-11B (220 aa).

Residue 18–25 (GDSGVGKS) coordinates GTP. The Effector region signature appears at 40 to 48 (KLSTIGVEF). GTP-binding positions include 66-70 (DTAGQ) and 124-127 (NKSD). 2 S-geranylgeranyl cysteine lipidation sites follow: C219 and C220.

Belongs to the small GTPase superfamily. Rab family.

The protein resides in the cell membrane. The chain is Ras-related protein Rab-11B (rab11B) from Dictyostelium discoideum (Social amoeba).